The chain runs to 104 residues: Large ribosomal subunit protein uL23 (104 aa).

The protein belongs to the universal ribosomal protein uL23 family. Part of the 50S ribosomal subunit. Contacts protein L29, and trigger factor when it is bound to the ribosome.

Its function is as follows. One of the early assembly proteins it binds 23S rRNA. One of the proteins that surrounds the polypeptide exit tunnel on the outside of the ribosome. Forms the main docking site for trigger factor binding to the ribosome. The polypeptide is Large ribosomal subunit protein uL23 (Rhodospirillum rubrum (strain ATCC 11170 / ATH 1.1.1 / DSM 467 / LMG 4362 / NCIMB 8255 / S1)).